A 217-amino-acid polypeptide reads, in one-letter code: Probable transaldolase (217 aa).

Lys83 functions as the Schiff-base intermediate with substrate in the catalytic mechanism.

The protein belongs to the transaldolase family. Type 3B subfamily.

The protein localises to the cytoplasm. The catalysed reaction is D-sedoheptulose 7-phosphate + D-glyceraldehyde 3-phosphate = D-erythrose 4-phosphate + beta-D-fructose 6-phosphate. It participates in carbohydrate degradation; pentose phosphate pathway; D-glyceraldehyde 3-phosphate and beta-D-fructose 6-phosphate from D-ribose 5-phosphate and D-xylulose 5-phosphate (non-oxidative stage): step 2/3. In terms of biological role, transaldolase is important for the balance of metabolites in the pentose-phosphate pathway. The sequence is that of Probable transaldolase from Brucella abortus (strain S19).